Reading from the N-terminus, the 158-residue chain is Small ribosomal subunit protein uS7 (158 aa).

Belongs to the universal ribosomal protein uS7 family. In terms of assembly, part of the 30S ribosomal subunit. Contacts proteins S9 and S11.

Its function is as follows. One of the primary rRNA binding proteins, it binds directly to 16S rRNA where it nucleates assembly of the head domain of the 30S subunit. Is located at the subunit interface close to the decoding center, probably blocks exit of the E-site tRNA. This chain is Small ribosomal subunit protein uS7, found in Azobacteroides pseudotrichonymphae genomovar. CFP2.